A 104-amino-acid polypeptide reads, in one-letter code: NADH-quinone oxidoreductase subunit K (104 aa).

The next 3 membrane-spanning stretches (helical) occupy residues 4–24, 31–51, and 67–87; these read VPAS…LFGA, VIVL…LVAF, and LFTM…LIAL.

This sequence belongs to the complex I subunit 4L family. NDH-1 is composed of 14 different subunits. Subunits NuoA, H, J, K, L, M, N constitute the membrane sector of the complex.

Its subcellular location is the cell membrane. It catalyses the reaction a quinone + NADH + 5 H(+)(in) = a quinol + NAD(+) + 4 H(+)(out). In terms of biological role, NDH-1 shuttles electrons from NADH, via FMN and iron-sulfur (Fe-S) centers, to quinones in the respiratory chain. The immediate electron acceptor for the enzyme in this species is believed to be a menaquinone. Couples the redox reaction to proton translocation (for every two electrons transferred, four hydrogen ions are translocated across the cytoplasmic membrane), and thus conserves the redox energy in a proton gradient. In Bacillus cytotoxicus (strain DSM 22905 / CIP 110041 / 391-98 / NVH 391-98), this protein is NADH-quinone oxidoreductase subunit K.